We begin with the raw amino-acid sequence, 160 residues long: 2-C-methyl-D-erythritol 2,4-cyclodiphosphate synthase (160 aa).

Residues D11 and H13 each contribute to the a divalent metal cation site. Residues 11–13 (DVH) and 37–38 (HS) each bind 4-CDP-2-C-methyl-D-erythritol 2-phosphate. Residue H45 coordinates a divalent metal cation. Residues 59-61 (DIG) and R145 each bind 4-CDP-2-C-methyl-D-erythritol 2-phosphate.

It belongs to the IspF family. As to quaternary structure, homotrimer. A divalent metal cation is required as a cofactor.

The enzyme catalyses 4-CDP-2-C-methyl-D-erythritol 2-phosphate = 2-C-methyl-D-erythritol 2,4-cyclic diphosphate + CMP. Its pathway is isoprenoid biosynthesis; isopentenyl diphosphate biosynthesis via DXP pathway; isopentenyl diphosphate from 1-deoxy-D-xylulose 5-phosphate: step 4/6. In terms of biological role, involved in the biosynthesis of isopentenyl diphosphate (IPP) and dimethylallyl diphosphate (DMAPP), two major building blocks of isoprenoid compounds. Catalyzes the conversion of 4-diphosphocytidyl-2-C-methyl-D-erythritol 2-phosphate (CDP-ME2P) to 2-C-methyl-D-erythritol 2,4-cyclodiphosphate (ME-CPP) with a corresponding release of cytidine 5-monophosphate (CMP). The chain is 2-C-methyl-D-erythritol 2,4-cyclodiphosphate synthase from Neisseria gonorrhoeae (strain ATCC 700825 / FA 1090).